Reading from the N-terminus, the 368-residue chain is CST complex subunit STN1 (368 aa).

Residues 1–185 (MQPGSSRCEE…KVYDQPFHSS (185 aa)) form an interaction with CTC1 region. Residues 57 to 155 (VDVLGTVIGV…EIHATTYYKV (99 aa)) constitute a DNA-binding region (OB). Winged helix-turn-helix (wHTH) stretches follow at residues 191 to 295 (EALS…YVTR) and 296 to 368 (EDKD…YTAF).

It belongs to the STN1 family. In terms of assembly, component of the CST complex, composed of TEN1/C17orf106, CTC1/C17orf68 and STN1; in the complex interacts directly with TEN1 and CTC1. Interacts with ACD/TPP1, POT1 and POLA1.

It localises to the nucleus. Its subcellular location is the chromosome. The protein resides in the telomere. Its function is as follows. Component of the CST complex proposed to act as a specialized replication factor promoting DNA replication under conditions of replication stress or natural replication barriers such as the telomere duplex. The CST complex binds single-stranded DNA with high affinity in a sequence-independent manner, while isolated subunits bind DNA with low affinity by themselves. Initially the CST complex has been proposed to protect telomeres from DNA degradation. However, the CST complex has been shown to be involved in several aspects of telomere replication. The CST complex inhibits telomerase and is involved in telomere length homeostasis; it is proposed to bind to newly telomerase-synthesized 3' overhangs and to terminate telomerase action implicating the association with the ACD:POT1 complex thus interfering with its telomerase stimulation activity. The CST complex is also proposed to be involved in fill-in synthesis of the telomeric C-strand probably implicating recruitment and activation of DNA polymerase alpha. The CST complex facilitates recovery from many forms of exogenous DNA damage; seems to be involved in the re-initiation of DNA replication at repaired forks and/or dormant origins. Required for efficicient replication of the duplex region of the telomere. Promotes efficient replication of lagging-strand telomeres. Promotes general replication start following replication-fork stalling implicating new origin firing. May be in involved in C-strand fill-in during late S/G2 phase independent of its role in telomere duplex replication. Component of the CST complex, a complex that binds to single-stranded DNA and is required to protect telomeres from DNA degradation. The CST complex binds single-stranded DNA with high affinity in a sequence-independent manner, while isolated subunits bind DNA with low affinity by themselves. In addition to telomere protection, the CST complex has probably a more general role in DNA metabolism at non-telomeric sites. The polypeptide is CST complex subunit STN1 (Homo sapiens (Human)).